The sequence spans 194 residues: Histone H1.0 (194 aa).

An N-acetylmethionine modification is found at Met1. A disordered region spans residues 1–26 (MTENSTSTPAAKPKRAKAAKKSTDHP). The residue at position 2 (Thr2) is an N-acetylthreonine; in Histone H1.0, N-terminally processed. The H15 domain maps to 24 to 97 (DHPKYSDMIV…GASGSFRLAK (74 aa)). Arg42 is subject to Citrulline. Residues 86–194 (GVGASGSFRL…SSAKRASKKK (109 aa)) form a disordered region. Ser104 is subject to ADP-ribosylserine. Over residues 105-194 (VAFKKTKKEV…SSAKRASKKK (90 aa)) the composition is skewed to basic residues.

The protein belongs to the histone H1/H5 family. Post-translationally, ADP-ribosylated on Ser-104 in response to DNA damage.

The protein resides in the nucleus. Its subcellular location is the chromosome. Its function is as follows. Histones H1 are necessary for the condensation of nucleosome chains into higher-order structures. The histones H1.0 are found in cells that are in terminal stages of differentiation or that have low rates of cell division. This is Histone H1.0 (H1-0) from Rattus norvegicus (Rat).